A 313-amino-acid polypeptide reads, in one-letter code: MKKQLIIGTRSSPLALWQAEFTKAELSKHYPDMEITLKLVKTTGDVLLDSPLSKIGDMGLFTKDIEKHLLAREIDLAVHSLKDVPTSTPEGLIITSFTEREDTRDVIISKGGVKLKDLPPNARMATSSLRRMSQLLSVRPDLDIRDIRGNLNTRFQKFDDGEFDAMMLAYAGVYRLNFSDRISEILPHDMMLPAVGQGALGIETRVDDEQTREIVRILNHSTTEYCCRAERALLRHLQGGCQIPIGAYATFSNGTLKLLAFVGSVDGKTALRNEITKTGLTSPEQAEEAGIALAEELLKQGADAILSQIRKTC.

At C241 the chain carries S-(dipyrrolylmethanemethyl)cysteine.

The protein belongs to the HMBS family. As to quaternary structure, monomer. Dipyrromethane is required as a cofactor.

The enzyme catalyses 4 porphobilinogen + H2O = hydroxymethylbilane + 4 NH4(+). The protein operates within porphyrin-containing compound metabolism; protoporphyrin-IX biosynthesis; coproporphyrinogen-III from 5-aminolevulinate: step 2/4. It participates in porphyrin-containing compound metabolism; chlorophyll biosynthesis. Its function is as follows. Tetrapolymerization of the monopyrrole PBG into the hydroxymethylbilane pre-uroporphyrinogen in several discrete steps. The chain is Porphobilinogen deaminase from Chlorobium chlorochromatii (strain CaD3).